Here is a 279-residue protein sequence, read N- to C-terminus: Thymidylate synthase (279 aa).

Residue 133-134 participates in dUMP binding; the sequence is RR. C154 (nucleophile) is an active-site residue. DUMP-binding positions include 178–181, N189, and 219–221; these read RSND and HIY. Residue D181 participates in (6R)-5,10-methylene-5,6,7,8-tetrahydrofolate binding. A278 serves as a coordination point for (6R)-5,10-methylene-5,6,7,8-tetrahydrofolate.

This sequence belongs to the thymidylate synthase family. Bacterial-type ThyA subfamily. In terms of assembly, homodimer.

The protein resides in the cytoplasm. The enzyme catalyses dUMP + (6R)-5,10-methylene-5,6,7,8-tetrahydrofolate = 7,8-dihydrofolate + dTMP. It functions in the pathway pyrimidine metabolism; dTTP biosynthesis. In terms of biological role, catalyzes the reductive methylation of 2'-deoxyuridine-5'-monophosphate (dUMP) to 2'-deoxythymidine-5'-monophosphate (dTMP) while utilizing 5,10-methylenetetrahydrofolate (mTHF) as the methyl donor and reductant in the reaction, yielding dihydrofolate (DHF) as a by-product. This enzymatic reaction provides an intracellular de novo source of dTMP, an essential precursor for DNA biosynthesis. This Streptococcus pyogenes serotype M12 (strain MGAS2096) protein is Thymidylate synthase.